The chain runs to 462 residues: UDP-N-acetylmuramoylalanine--D-glutamate ligase (462 aa).

117–123 (GTNGKTT) is a binding site for ATP.

This sequence belongs to the MurCDEF family.

It localises to the cytoplasm. The catalysed reaction is UDP-N-acetyl-alpha-D-muramoyl-L-alanine + D-glutamate + ATP = UDP-N-acetyl-alpha-D-muramoyl-L-alanyl-D-glutamate + ADP + phosphate + H(+). It participates in cell wall biogenesis; peptidoglycan biosynthesis. Cell wall formation. Catalyzes the addition of glutamate to the nucleotide precursor UDP-N-acetylmuramoyl-L-alanine (UMA). The polypeptide is UDP-N-acetylmuramoylalanine--D-glutamate ligase (Synechococcus sp. (strain CC9902)).